Consider the following 185-residue polypeptide: Protein-lysine palmitoyltransferase CyaC (185 aa).

Residues histidine 33 and aspartate 102 contribute to the active site.

It belongs to the RTX toxin acyltransferase family. As to quaternary structure, homodimer.

It is found in the cytoplasm. It carries out the reaction hexadecanoyl-[ACP] + L-lysyl-[protein] = N(6)-hexadecanoyl-L-lysyl-[protein] + holo-[ACP] + H(+). The enzyme catalyses (9Z)-hexadecenoyl-[ACP] + L-lysyl-[protein] = N(6)-[(9Z)-hexadecenoyl]-L-lysyl-[protein] + holo-[ACP] + H(+). In terms of biological role, protein-lysine palmitoyltransferase that catalyzes palmitoylation of the protoxin (CyaA) at two internal lysine residues, thereby converting it to the active toxin. The sequence is that of Protein-lysine palmitoyltransferase CyaC from Bordetella bronchiseptica (strain ATCC BAA-588 / NCTC 13252 / RB50) (Alcaligenes bronchisepticus).